A 402-amino-acid polypeptide reads, in one-letter code: Putative nickel insertion protein (402 aa).

It belongs to the LarC family.

In Synechococcus elongatus (strain ATCC 33912 / PCC 7942 / FACHB-805) (Anacystis nidulans R2), this protein is Putative nickel insertion protein.